The following is a 257-amino-acid chain: Transcription factor bHLH55 (257 aa).

In terms of domain architecture, bHLH spans 74-126 (NKRAKHKELERQRRQENTSLFKILRYLLPSQYIKGKRSSADHVLEAVNYIKDL).

In terms of assembly, homodimer. Expressed in roots, leaves, stems, and flowers.

Its subcellular location is the nucleus. The chain is Transcription factor bHLH55 (BHLH55) from Arabidopsis thaliana (Mouse-ear cress).